The primary structure comprises 180 residues: ATP synthase subunit delta (180 aa).

The protein belongs to the ATPase delta chain family. As to quaternary structure, F-type ATPases have 2 components, F(1) - the catalytic core - and F(0) - the membrane proton channel. F(1) has five subunits: alpha(3), beta(3), gamma(1), delta(1), epsilon(1). F(0) has three main subunits: a(1), b(2) and c(10-14). The alpha and beta chains form an alternating ring which encloses part of the gamma chain. F(1) is attached to F(0) by a central stalk formed by the gamma and epsilon chains, while a peripheral stalk is formed by the delta and b chains.

It is found in the cell membrane. Functionally, f(1)F(0) ATP synthase produces ATP from ADP in the presence of a proton or sodium gradient. F-type ATPases consist of two structural domains, F(1) containing the extramembraneous catalytic core and F(0) containing the membrane proton channel, linked together by a central stalk and a peripheral stalk. During catalysis, ATP synthesis in the catalytic domain of F(1) is coupled via a rotary mechanism of the central stalk subunits to proton translocation. Its function is as follows. This protein is part of the stalk that links CF(0) to CF(1). It either transmits conformational changes from CF(0) to CF(1) or is implicated in proton conduction. In Lactobacillus delbrueckii subsp. bulgaricus (strain ATCC BAA-365 / Lb-18), this protein is ATP synthase subunit delta.